The chain runs to 231 residues: Enolase-phosphatase E1 (231 aa).

It belongs to the HAD-like hydrolase superfamily. MasA/MtnC family. In terms of assembly, monomer. It depends on Mg(2+) as a cofactor.

It catalyses the reaction 5-methylsulfanyl-2,3-dioxopentyl phosphate + H2O = 1,2-dihydroxy-5-(methylsulfanyl)pent-1-en-3-one + phosphate. The protein operates within amino-acid biosynthesis; L-methionine biosynthesis via salvage pathway; L-methionine from S-methyl-5-thio-alpha-D-ribose 1-phosphate: step 3/6. Its pathway is amino-acid biosynthesis; L-methionine biosynthesis via salvage pathway; L-methionine from S-methyl-5-thio-alpha-D-ribose 1-phosphate: step 4/6. Its function is as follows. Bifunctional enzyme that catalyzes the enolization of 2,3-diketo-5-methylthiopentyl-1-phosphate (DK-MTP-1-P) into the intermediate 2-hydroxy-3-keto-5-methylthiopentenyl-1-phosphate (HK-MTPenyl-1-P), which is then dephosphorylated to form the acireductone 1,2-dihydroxy-3-keto-5-methylthiopentene (DHK-MTPene). The polypeptide is Enolase-phosphatase E1 (Stenotrophomonas maltophilia (strain K279a)).